A 450-amino-acid chain; its full sequence is MPSLEVKLRKAVLAATDGKLRSDNWQYIIGVCDLVKEDPEDASQIVMEMIEKRLGQNDANVMLRSLALVVALAENCGSRLKQQVSSKHFTGILAQLLESGDVHMTVKKEIAKVVKQLSDSFKSDPSLKTMGDLNTRIRRKWPGLLEEPEKPSKQKVSHQEATDEDQELQRALKMSLEEFEKSKQQSNGSAVQSNSLQDHNQGQQQPQQQTTSGIRRVRALYDLNANEQDELSFRKGDVIVVLEQVYRDWWRGSLHGKIGIFPLNYVTPITEPSPVESQREQQIEEGVLSQAQNVQVLSAKMQMASGKGLSELNQDPEFNDLYSTVTPIRPHVTKLIGKYAKEKDDVIALRQVLLNAESTYNELLDRAAKSYSIPNTQAPPYAPAVTSQPGYVSNNTYQTTNGQYTQHNITPQQQYQVPSQNYQSQPPSMQSNHYIGYQHPGINDQPPPNY.

Residues Ala-15–Leu-145 enclose the VHS domain. Disordered regions lie at residues Trp-141–Glu-167, Phe-179–Ser-212, and Pro-374–Tyr-450. Residues Glu-147 to Glu-167 show a composition bias toward basic and acidic residues. A UIM domain is found at Asp-163 to Ser-182. A compositionally biased stretch (polar residues) spans Gln-184–Leu-196. A compositionally biased stretch (low complexity) spans Gln-197–Gln-209. One can recognise an SH3 domain in the interval Ser-212–Glu-271. Residues Asn-394–Asn-432 show a composition bias toward low complexity.

Belongs to the STAM family. As to quaternary structure, component of the ESCRT-0 complex composed of HSE1 and VPS27.

It is found in the endosome membrane. In terms of biological role, component of the ESCRT-0 complex which is the sorting receptor for ubiquitinated cargo proteins at the multivesicular body (MVB). The protein is Class E vacuolar protein-sorting machinery protein HSE1 (HSE1) of Candida glabrata (strain ATCC 2001 / BCRC 20586 / JCM 3761 / NBRC 0622 / NRRL Y-65 / CBS 138) (Yeast).